Reading from the N-terminus, the 308-residue chain is Ribosomal RNA large subunit methyltransferase F (308 aa).

It belongs to the methyltransferase superfamily. METTL16/RlmF family.

Its subcellular location is the cytoplasm. It carries out the reaction adenosine(1618) in 23S rRNA + S-adenosyl-L-methionine = N(6)-methyladenosine(1618) in 23S rRNA + S-adenosyl-L-homocysteine + H(+). In terms of biological role, specifically methylates the adenine in position 1618 of 23S rRNA. This Salmonella heidelberg (strain SL476) protein is Ribosomal RNA large subunit methyltransferase F.